We begin with the raw amino-acid sequence, 68 residues long: Large ribosomal subunit protein bL31 (68 aa).

Zn(2+) is bound by residues Cys17, Cys19, Cys37, and Cys40.

Belongs to the bacterial ribosomal protein bL31 family. Type A subfamily. Part of the 50S ribosomal subunit. Zn(2+) serves as cofactor.

Binds the 23S rRNA. In Clostridium perfringens (strain ATCC 13124 / DSM 756 / JCM 1290 / NCIMB 6125 / NCTC 8237 / Type A), this protein is Large ribosomal subunit protein bL31.